The chain runs to 280 residues: Hydroxyethylthiazole kinase (280 aa).

A substrate-binding site is contributed by M50. Residues K125 and T178 each coordinate ATP. Substrate is bound at residue G205.

This sequence belongs to the Thz kinase family. The cofactor is Mg(2+).

The enzyme catalyses 5-(2-hydroxyethyl)-4-methylthiazole + ATP = 4-methyl-5-(2-phosphooxyethyl)-thiazole + ADP + H(+). It functions in the pathway cofactor biosynthesis; thiamine diphosphate biosynthesis; 4-methyl-5-(2-phosphoethyl)-thiazole from 5-(2-hydroxyethyl)-4-methylthiazole: step 1/1. Functionally, catalyzes the phosphorylation of the hydroxyl group of 4-methyl-5-beta-hydroxyethylthiazole (THZ). The polypeptide is Hydroxyethylthiazole kinase (Lacticaseibacillus paracasei (strain ATCC 334 / BCRC 17002 / CCUG 31169 / CIP 107868 / KCTC 3260 / NRRL B-441) (Lactobacillus paracasei)).